Reading from the N-terminus, the 181-residue chain is Transcription antitermination protein NusB (181 aa).

The tract at residues 1 to 36 is disordered; that stretch reads MTEDNNKAAGAKPRPARQVRTGLTSTGARKASAKSN.

Belongs to the NusB family.

Involved in transcription antitermination. Required for transcription of ribosomal RNA (rRNA) genes. Binds specifically to the boxA antiterminator sequence of the ribosomal RNA (rrn) operons. The chain is Transcription antitermination protein NusB from Variovorax paradoxus (strain S110).